The sequence spans 279 residues: MKIGYIYAIENNLNDEVYIGSTLRTIEERFSEHKASARRRPTCTFHKFMSLHGIEHFKIIELKKIEVNSFFELQALEESYIRDYGSLNTINGVNKAAVHTRNEILVKRKIYSKECVKLPPLDEVIKIATKASLKKLEINEFIDLFIGEENKWNKMFDSDLSGIHISSLILNQLGYEGEFKNQQTCFKRFLKRNNIIIQEFSSSNPELKLYPSIQEEMKNMKTNVIANRKWLIANPRDLKKIIMKLNTKNGDAIREYYICMDELVQFYSQYSLSYDSNNN.

The 89-residue stretch at 2–90 (KIGYIYAIEN…IRDYGSLNTI (89 aa)) folds into the GIY-YIG domain.

Belongs to the IIV-6 019R family.

This is an uncharacterized protein from Acheta domesticus (House cricket).